The chain runs to 501 residues: Capsid protein (501 aa).

Residues 78–98 form a disordered region; that stretch reads SEEGFPVEPKTEEKDIPSTSG. The Nuclear localization signal signature appears at 122-125; it reads KRGF. Residues 431-448 form a CCHC-type zinc finger; sequence CKCWICHEEGHYANECPK.

It belongs to the caulimoviridae capsid protein family. Interacts (via nuclear localization signal) with host importin alpha.

It is found in the virion. Its subcellular location is the host nucleus. In terms of biological role, self assembles to form an icosahedral capsid, about 50 nm in diameter, nm, composed of 420 subunits of the viral capsid protein. The capsid encapsulates the genomic dsDNA. Following virus entry into host cell, provides nuclear import of the viral genome. Virus particles do not enter the nucleus, but dock at the nuclear membrane through the interaction with host importins. In Cestrum parqui (CmYLCV), this protein is Capsid protein.